A 102-amino-acid chain; its full sequence is XFENERGVADPVGFFDPLGFTADGSVENFKKLAQTEIKHGRVAMLATMGYITQEITGKLPGYLSPSTGVKYDDDINGVLGLIKIVPAGLWGIMIFYAALSLA.

Chlorophyll a is bound by residues glutamate 36 and histidine 39. A helical transmembrane segment spans residues 78-98 (VLGLIKIVPAGLWGIMIFYAA).

The protein belongs to the light-harvesting chlorophyll a/b-binding (LHC) protein family. The LHC complex consists of chlorophyll a-b binding proteins. It depends on Binds at least 14 chlorophylls (8 Chl-a and 6 Chl-b) and carotenoids such as lutein and neoxanthin. as a cofactor. Post-translationally, photoregulated by reversible phosphorylation of its threonine residues.

It localises to the plastid. The protein localises to the chloroplast thylakoid membrane. Its function is as follows. The light-harvesting complex (LHC) functions as a light receptor, it captures and delivers excitation energy to photosystems with which it is closely associated. The protein is Caroteno-chlorophyll a-c-binding protein of Amphidinium carterae (Dinoflagellate).